The chain runs to 1327 residues: Kinectin (1327 aa).

Over 1-8 the chain is Cytoplasmic; sequence MELYESTY. Residues 9–29 traverse the membrane as a helical; Signal-anchor for type II membrane protein segment; the sequence is FIVLIPSVVITVIFLFFWLFM. The Lumenal segment spans residues 30–1327; sequence KETLYDEVLA…EVNQQLTKET (1298 aa). Disordered stretches follow at residues 49–181 and 197–216; these read STKT…EQDK and LSHQ…GLSK. Asparagine 69 carries an N-linked (GlcNAc...) asparagine glycan. Basic and acidic residues-rich tracts occupy residues 73–86 and 111–135; these read RESD…DFKL and VRER…ESDA. Phosphoserine occurs at positions 75 and 77. A compositionally biased stretch (basic residues) spans 163–173; that stretch reads LKKKAGQKKSK. Positions 329–1327 form a coiled coil; it reads ELSGLLHQLQ…EVNQQLTKET (999 aa). Asparagine 1031 carries an N-linked (GlcNAc...) asparagine glycan. A Phosphoserine modification is found at serine 1060. N-linked (GlcNAc...) asparagine glycosylation occurs at asparagine 1066. A Phosphoserine modification is found at serine 1290.

It belongs to the kinectin family. As to expression, expressed in all tissues examined including 12-day embryo, adult heart, brain, ovary, kidney, lung, small intestine, spleen, thymus and pancreas.

Its subcellular location is the endoplasmic reticulum membrane. Its function is as follows. Receptor for kinesin thus involved in kinesin-driven vesicle motility. Accumulates in integrin-based adhesion complexes (IAC) upon integrin aggregation by fibronectin. This is Kinectin from Mus musculus (Mouse).